The following is a 393-amino-acid chain: Elongation factor Tu (393 aa).

The tr-type G domain occupies 10–203 (KPHVNIGTIG…AVDSYIPQPV (194 aa)). The G1 stretch occupies residues 19–26 (GHVDHGKT). 19–26 (GHVDHGKT) is a binding site for GTP. Residue T26 coordinates Mg(2+). The G2 stretch occupies residues 60 to 64 (GITIS). A G3 region spans residues 81 to 84 (DCPG). GTP-binding positions include 81 to 85 (DCPGH) and 136 to 139 (NKVD). A G4 region spans residues 136-139 (NKVD). The tract at residues 173–175 (SAL) is G5.

This sequence belongs to the TRAFAC class translation factor GTPase superfamily. Classic translation factor GTPase family. EF-Tu/EF-1A subfamily. As to quaternary structure, monomer.

It localises to the cytoplasm. The catalysed reaction is GTP + H2O = GDP + phosphate + H(+). Functionally, GTP hydrolase that promotes the GTP-dependent binding of aminoacyl-tRNA to the A-site of ribosomes during protein biosynthesis. This Chlorobaculum tepidum (strain ATCC 49652 / DSM 12025 / NBRC 103806 / TLS) (Chlorobium tepidum) protein is Elongation factor Tu.